The sequence spans 327 residues: tRNA U34 carboxymethyltransferase (327 aa).

Residues K91, W105, K110, G130, 181 to 182 (IE), M196, Y200, and R315 contribute to the carboxy-S-adenosyl-L-methionine site.

The protein belongs to the class I-like SAM-binding methyltransferase superfamily. CmoB family. Homotetramer.

The catalysed reaction is carboxy-S-adenosyl-L-methionine + 5-hydroxyuridine(34) in tRNA = 5-carboxymethoxyuridine(34) in tRNA + S-adenosyl-L-homocysteine + H(+). Functionally, catalyzes carboxymethyl transfer from carboxy-S-adenosyl-L-methionine (Cx-SAM) to 5-hydroxyuridine (ho5U) to form 5-carboxymethoxyuridine (cmo5U) at position 34 in tRNAs. This chain is tRNA U34 carboxymethyltransferase, found in Pectobacterium atrosepticum (strain SCRI 1043 / ATCC BAA-672) (Erwinia carotovora subsp. atroseptica).